Here is a 480-residue protein sequence, read N- to C-terminus: UDP-glycosyltransferase 72B2 (480 aa).

UDP-alpha-D-glucose-binding positions include Ser-277, 347-349, 364-372, and 386-389; these read APQ, HCGWNSTLE, and FAEQ.

Belongs to the UDP-glycosyltransferase family.

In Arabidopsis thaliana (Mouse-ear cress), this protein is UDP-glycosyltransferase 72B2 (UGT72B2).